Consider the following 88-residue polypeptide: Small ribosomal subunit protein bS16 (88 aa).

Belongs to the bacterial ribosomal protein bS16 family.

This Buchnera aphidicola subsp. Cinara cedri (strain Cc) protein is Small ribosomal subunit protein bS16.